The chain runs to 23 residues: Phospholipase A2 homolog 4 (23 aa).

This sequence belongs to the phospholipase A2 family. Group II subfamily. K49 sub-subfamily. As to quaternary structure, homodimer; non-covalently linked (probable alternative/compact dimer conformation in solution). In terms of tissue distribution, expressed by the venom gland.

Its subcellular location is the secreted. Snake venom phospholipase A2 homolog that lacks enzymatic activity. Induces acute muscle damage after intramuscular injection in mice and disrupts negatively charged liposomes but not positively charged ones. Also exerts a weak anticoagulant effect only at concentrations of 40 ug/ml or higher. A model of myotoxic mechanism has been proposed: an apo Lys49-PLA2 is activated by the entrance of a hydrophobic molecule (e.g. fatty acid) at the hydrophobic channel of the protein leading to a reorientation of a monomer. This reorientation causes a transition between 'inactive' to 'active' states, causing alignment of C-terminal and membrane-docking sites (MDoS) side-by-side and putting the membrane-disruption sites (MDiS) in the same plane, exposed to solvent and in a symmetric position for both monomers. The MDoS region stabilizes the toxin on membrane by the interaction of charged residues with phospholipid head groups. Subsequently, the MDiS region destabilizes the membrane with penetration of hydrophobic residues. This insertion causes a disorganization of the membrane, allowing an uncontrolled influx of ions (i.e. calcium and sodium), and eventually triggering irreversible intracellular alterations and cell death. This is Phospholipase A2 homolog 4 from Bothrops asper (Terciopelo).